A 185-amino-acid chain; its full sequence is MVKIKMPALFRRRSGSKSPPLPQADPASGGGSPAPTPEEEMERVFRKFDANGDGRISRSELGALFESLGHAATDDELARMMAEADADGDGFISLDEFAALNATASGDAAAVEEDLRHAFRVFDADGNGTISAAELARVLHGLGEKATVQQCRRMIEGVDQNGDGLISFEEFKVMMAGGGSFAKIA.

The interval M1–M41 is disordered. 4 EF-hand domains span residues T36–A71, A72–D107, A110–K145, and A146–F181. Positions 49, 51, 53, 55, 60, 85, 87, 89, 96, 123, 125, 127, 129, 134, 159, 161, 163, and 170 each coordinate Ca(2+).

In terms of biological role, potential calcium sensor. The protein is Probable calcium-binding protein CML10 (CML10) of Oryza sativa subsp. japonica (Rice).